We begin with the raw amino-acid sequence, 258 residues long: Enoyl-[acyl-carrier-protein] reductase [NADH] FabI (258 aa).

NAD(+)-binding positions include Gly13, 19–20 (SI), 67–68 (DV), and Leu95. Ala98 is a substrate binding site. Active-site proton acceptor residues include Tyr148 and Tyr158. NAD(+)-binding positions include Lys165 and 194–198 (IRTLA).

Belongs to the short-chain dehydrogenases/reductases (SDR) family. FabI subfamily. As to quaternary structure, homotetramer.

The enzyme catalyses a 2,3-saturated acyl-[ACP] + NAD(+) = a (2E)-enoyl-[ACP] + NADH + H(+). It functions in the pathway lipid metabolism; fatty acid biosynthesis. In terms of biological role, catalyzes the reduction of a carbon-carbon double bond in an enoyl moiety that is covalently linked to an acyl carrier protein (ACP). Involved in the elongation cycle of fatty acid which are used in the lipid metabolism. The chain is Enoyl-[acyl-carrier-protein] reductase [NADH] FabI (fabI) from Synechocystis sp. (strain ATCC 27184 / PCC 6803 / Kazusa).